We begin with the raw amino-acid sequence, 208 residues long: Superoxide dismutase [Mn] 2 (208 aa).

The Mn(2+) site is built by histidine 28, histidine 83, aspartate 165, and histidine 169.

Belongs to the iron/manganese superoxide dismutase family. In terms of assembly, homodimer. Mn(2+) serves as cofactor.

The enzyme catalyses 2 superoxide + 2 H(+) = H2O2 + O2. In terms of biological role, destroys superoxide anion radicals which are normally produced within the cells and which are toxic to biological systems. The chain is Superoxide dismutase [Mn] 2 (sodA2) from Bacillus cereus (strain ATCC 14579 / DSM 31 / CCUG 7414 / JCM 2152 / NBRC 15305 / NCIMB 9373 / NCTC 2599 / NRRL B-3711).